We begin with the raw amino-acid sequence, 951 residues long: Valine--tRNA ligase (951 aa).

The short motif at 42–52 is the 'HIGH' region element; that stretch reads PNVTGSLHMGH. A 'KMSKS' region motif is present at residues 554–558; the sequence is KMSKS. Lysine 557 provides a ligand contact to ATP. A coiled-coil region spans residues 880–914; the sequence is AGLIDKAAELDRLAKEVAKLEAEIGRIESKLSNEG.

This sequence belongs to the class-I aminoacyl-tRNA synthetase family. ValS type 1 subfamily. As to quaternary structure, monomer.

It is found in the cytoplasm. The enzyme catalyses tRNA(Val) + L-valine + ATP = L-valyl-tRNA(Val) + AMP + diphosphate. In terms of biological role, catalyzes the attachment of valine to tRNA(Val). As ValRS can inadvertently accommodate and process structurally similar amino acids such as threonine, to avoid such errors, it has a 'posttransfer' editing activity that hydrolyzes mischarged Thr-tRNA(Val) in a tRNA-dependent manner. In Pectobacterium atrosepticum (strain SCRI 1043 / ATCC BAA-672) (Erwinia carotovora subsp. atroseptica), this protein is Valine--tRNA ligase.